The sequence spans 265 residues: tRNA pseudouridine synthase A (265 aa).

Asp53 (nucleophile) is an active-site residue. A substrate-binding site is contributed by Tyr111.

The protein belongs to the tRNA pseudouridine synthase TruA family. As to quaternary structure, homodimer.

The enzyme catalyses uridine(38/39/40) in tRNA = pseudouridine(38/39/40) in tRNA. Its function is as follows. Formation of pseudouridine at positions 38, 39 and 40 in the anticodon stem and loop of transfer RNAs. This Acinetobacter baumannii (strain ACICU) protein is tRNA pseudouridine synthase A.